The chain runs to 268 residues: Tropinone reductase homolog (268 aa).

NADP(+) is bound at residue 21–45; it reads LVTGGTRGIGYAIVEELANFGAEVY. Position 154 (S154) interacts with substrate. Y167 acts as the Proton acceptor in catalysis.

This sequence belongs to the short-chain dehydrogenases/reductases (SDR) family.

The sequence is that of Tropinone reductase homolog from Datura stramonium (Jimsonweed).